The chain runs to 371 residues: MSITTLAVPGVRGLTPYQPGKPIGELEREFALKRIVKLASNENPLGASPKVLEVVRRILGGTHLYPDGSGFELKAALAEKLGVEPAQIVLGNGSNDVLDLVARAFLTAGRNAVYSEYAFAVYPIATQTAGATGKTAPAHDGSRGPRFGHDLETMLERVDPDTRVVFIANPNNPTGTLLGRGELYSFLAALPEHVIAVVDEAYFEYARRPDHPDALEWLGEFPGLIVTRTFSKAYGLAGLRVGYAVTGVEIADLLNRARQPFNVNTLGLAAAAAALEDTGFLEATVQANDAGRSQLEAGFRERGFDFIPSAGNFVSFDLGRPATPVFDALLREGVIVRPLGNYGLPNHLRVSVGTAEEIDLFFAALDRVLVP.

K232 is subject to N6-(pyridoxal phosphate)lysine.

This sequence belongs to the class-II pyridoxal-phosphate-dependent aminotransferase family. Histidinol-phosphate aminotransferase subfamily. In terms of assembly, homodimer. Pyridoxal 5'-phosphate serves as cofactor.

The catalysed reaction is L-histidinol phosphate + 2-oxoglutarate = 3-(imidazol-4-yl)-2-oxopropyl phosphate + L-glutamate. It functions in the pathway amino-acid biosynthesis; L-histidine biosynthesis; L-histidine from 5-phospho-alpha-D-ribose 1-diphosphate: step 7/9. This is Histidinol-phosphate aminotransferase 2 from Methylococcus capsulatus (strain ATCC 33009 / NCIMB 11132 / Bath).